We begin with the raw amino-acid sequence, 215 residues long: Thymidylate kinase (215 aa).

Residue 10–17 (GGEGVGKT) participates in ATP binding.

This sequence belongs to the thymidylate kinase family.

It catalyses the reaction dTMP + ATP = dTDP + ADP. In terms of biological role, phosphorylation of dTMP to form dTDP in both de novo and salvage pathways of dTTP synthesis. The protein is Thymidylate kinase of Bartonella henselae (strain ATCC 49882 / DSM 28221 / CCUG 30454 / Houston 1) (Rochalimaea henselae).